We begin with the raw amino-acid sequence, 471 residues long: Ribulose bisphosphate carboxylase large chain (471 aa).

The propeptide occupies 1-2 (MS). Pro-3 is subject to N-acetylproline. Lys-14 bears the N6,N6,N6-trimethyllysine mark. Asn-123 and Thr-173 together coordinate substrate. Lys-175 acts as the Proton acceptor in catalysis. Lys-177 contacts substrate. Mg(2+) contacts are provided by Lys-201, Asp-203, and Glu-204. Lys-201 bears the N6-carboxylysine mark. The active-site Proton acceptor is the His-294. Substrate is bound by residues Arg-295, His-327, and Ser-379.

This sequence belongs to the RuBisCO large chain family. Type I subfamily. In terms of assembly, heterohexadecamer of 8 large chains and 8 small chains; disulfide-linked. The disulfide link is formed within the large subunit homodimers. Mg(2+) serves as cofactor. Post-translationally, the disulfide bond which can form in the large chain dimeric partners within the hexadecamer appears to be associated with oxidative stress and protein turnover.

Its subcellular location is the plastid. It is found in the chloroplast. It catalyses the reaction 2 (2R)-3-phosphoglycerate + 2 H(+) = D-ribulose 1,5-bisphosphate + CO2 + H2O. The catalysed reaction is D-ribulose 1,5-bisphosphate + O2 = 2-phosphoglycolate + (2R)-3-phosphoglycerate + 2 H(+). In terms of biological role, ruBisCO catalyzes two reactions: the carboxylation of D-ribulose 1,5-bisphosphate, the primary event in carbon dioxide fixation, as well as the oxidative fragmentation of the pentose substrate in the photorespiration process. Both reactions occur simultaneously and in competition at the same active site. The protein is Ribulose bisphosphate carboxylase large chain of Drymophloeus subdistichus (Palm tree).